A 207-amino-acid polypeptide reads, in one-letter code: Arginine exporter protein ArgO (207 aa).

Helical transmembrane passes span 1–21, 42–62, 67–87, 111–131, 150–170, and 185–205; these read MLST…PLGP, LCAI…SALL, LLLQ…GWGA, VVAI…DTIV, FGAA…AAWF, and GFIC…GLLI.

The protein belongs to the LysE/ArgO transporter (TC 2.A.75) family.

It localises to the cell inner membrane. The catalysed reaction is L-arginine(in) = L-arginine(out). Functionally, involved in the export of arginine. Important to control the intracellular level of arginine and the correct balance between arginine and lysine. The sequence is that of Arginine exporter protein ArgO from Photorhabdus laumondii subsp. laumondii (strain DSM 15139 / CIP 105565 / TT01) (Photorhabdus luminescens subsp. laumondii).